Consider the following 238-residue polypeptide: Endothelial protein C receptor (238 aa).

The N-terminal stretch at 1–17 is a signal peptide; sequence MLTTLLPILLLSGWAFC. Topologically, residues 18 to 210 are extracellular; the sequence is SQDASDGLQR…GSQTSRSYTS (193 aa). Asn-47, Asn-64, Asn-136, and Asn-172 each carry an N-linked (GlcNAc...) asparagine glycan. Cys-118 and Cys-186 form a disulfide bridge. The helical transmembrane segment at 211–231 threads the bilayer; the sequence is LVLGVLVGSFIIAGVAVGIFL. Over 232 to 238 the chain is Cytoplasmic; it reads CTGGRRC.

N-glycosylated. In terms of processing, a soluble form exists; probably released by a metalloprotease. Seems to have the same activity as the membrane-bound form. Expressed strongly in the endothelial cells of arteries and veins in heart and lung, less intensely in capillaries in the lung and skin, and not at all in the endothelium of small vessels of the liver and kidney.

It is found in the membrane. Its function is as follows. Binds activated protein C. Enhances protein C activation by the thrombin-thrombomodulin complex; plays a role in the protein C pathway controlling blood coagulation. The chain is Endothelial protein C receptor (PROCR) from Homo sapiens (Human).